Consider the following 431-residue polypeptide: Mitochondrial inner membrane protein OXA1-like (431 aa).

The N-terminal 22 residues, 1–22 (MATCLRGITKRVNLLQRRVYPS), are a transit peptide targeting the mitochondrion. The next 5 helical transmembrane spans lie at 119 to 139 (VVPA…PVAA), 155 to 175 (WWAS…PILL), 227 to 247 (FTPL…FFAI), 269 to 289 (TTTD…LIMV), and 312 to 332 (IIAF…FCYW). The disordered stretch occupies residues 362 to 414 (NSSTRQPSPSSPLPFSFAEPKDQSVVAQEKPPMSSESSSSVPDRRISRSSVLN). Positions 392–402 (PPMSSESSSSV) are enriched in low complexity.

Belongs to the OXA1/ALB3/YidC (TC 2.A.9.2) family.

Its subcellular location is the mitochondrion inner membrane. Functionally, probably required for the insertion of integral membrane proteins into the mitochondrial inner membrane. May participate in the activity and assembly of cytochrome oxidase. This is Mitochondrial inner membrane protein OXA1-like (OXA1L) from Arabidopsis thaliana (Mouse-ear cress).